Reading from the N-terminus, the 264-residue chain is Thymidylate synthase (264 aa).

R21 provides a ligand contact to dUMP. (6R)-5,10-methylene-5,6,7,8-tetrahydrofolate is bound at residue H51. 126-127 (RR) provides a ligand contact to dUMP. The active-site Nucleophile is C146. DUMP is bound by residues 166 to 169 (RSCD), N177, and 207 to 209 (HLY). D169 lines the (6R)-5,10-methylene-5,6,7,8-tetrahydrofolate pocket. Residue S263 coordinates (6R)-5,10-methylene-5,6,7,8-tetrahydrofolate.

Belongs to the thymidylate synthase family. Bacterial-type ThyA subfamily. As to quaternary structure, homodimer.

The protein resides in the cytoplasm. The catalysed reaction is dUMP + (6R)-5,10-methylene-5,6,7,8-tetrahydrofolate = 7,8-dihydrofolate + dTMP. It participates in pyrimidine metabolism; dTTP biosynthesis. Its function is as follows. Catalyzes the reductive methylation of 2'-deoxyuridine-5'-monophosphate (dUMP) to 2'-deoxythymidine-5'-monophosphate (dTMP) while utilizing 5,10-methylenetetrahydrofolate (mTHF) as the methyl donor and reductant in the reaction, yielding dihydrofolate (DHF) as a by-product. This enzymatic reaction provides an intracellular de novo source of dTMP, an essential precursor for DNA biosynthesis. This chain is Thymidylate synthase, found in Wigglesworthia glossinidia brevipalpis.